The chain runs to 378 residues: Queuine tRNA-ribosyltransferase (378 aa).

The Proton acceptor role is filled by D89. Residues 89 to 93 (DSGGF), D143, Q187, and G214 contribute to the substrate site. The tract at residues 245 to 251 (GVGKPED) is RNA binding. The active-site Nucleophile is the D264. Positions 269-273 (TRNAR) are RNA binding; important for wobble base 34 recognition. Zn(2+) contacts are provided by C302, C304, C307, and H333.

It belongs to the queuine tRNA-ribosyltransferase family. In terms of assembly, homodimer. Within each dimer, one monomer is responsible for RNA recognition and catalysis, while the other monomer binds to the replacement base PreQ1. It depends on Zn(2+) as a cofactor.

It catalyses the reaction 7-aminomethyl-7-carbaguanine + guanosine(34) in tRNA = 7-aminomethyl-7-carbaguanosine(34) in tRNA + guanine. It functions in the pathway tRNA modification; tRNA-queuosine biosynthesis. Catalyzes the base-exchange of a guanine (G) residue with the queuine precursor 7-aminomethyl-7-deazaguanine (PreQ1) at position 34 (anticodon wobble position) in tRNAs with GU(N) anticodons (tRNA-Asp, -Asn, -His and -Tyr). Catalysis occurs through a double-displacement mechanism. The nucleophile active site attacks the C1' of nucleotide 34 to detach the guanine base from the RNA, forming a covalent enzyme-RNA intermediate. The proton acceptor active site deprotonates the incoming PreQ1, allowing a nucleophilic attack on the C1' of the ribose to form the product. After dissociation, two additional enzymatic reactions on the tRNA convert PreQ1 to queuine (Q), resulting in the hypermodified nucleoside queuosine (7-(((4,5-cis-dihydroxy-2-cyclopenten-1-yl)amino)methyl)-7-deazaguanosine). The sequence is that of Queuine tRNA-ribosyltransferase from Aeromonas hydrophila subsp. hydrophila (strain ATCC 7966 / DSM 30187 / BCRC 13018 / CCUG 14551 / JCM 1027 / KCTC 2358 / NCIMB 9240 / NCTC 8049).